The sequence spans 486 residues: Vacuolar protein sorting-associated protein 73 (486 aa).

At 1–26 the chain is on the cytoplasmic side; that stretch reads MNRILSSASLLSNVSMPRQNKHKITK. A helical transmembrane segment spans residues 27 to 47; that stretch reads ALCYAIIVASIGSIQFGYHLS. The Mitochondrial intermembrane portion of the chain corresponds to 48–90; the sequence is ELNAPQQVLSCSEFDIPMEGYPYDRTWLGKRGYKQCIPLNDEQ. A helical transmembrane segment spans residues 91–111; sequence IGIVTSVFCIGGILGSYFATS. Residues 112–119 lie on the Cytoplasmic side of the membrane; it reads LANIYGRK. Residues 120 to 140 form a helical membrane-spanning segment; the sequence is FSSLINCTLNIVGSLIIFNSN. The Mitochondrial intermembrane portion of the chain corresponds to 141 to 146; it reads SYRGLI. The helical transmembrane segment at 147–167 threads the bilayer; sequence IGRILVGISCGSLIVIIPLFI. Residues 168–178 are Cytoplasmic-facing; sequence KEVAPSGWEGL. A helical transmembrane segment spans residues 179–199; the sequence is LGSMTQICIRLGVLLTQGIAL. The Mitochondrial intermembrane segment spans residues 200–208; that stretch reads PLTDSYRWR. A helical membrane pass occupies residues 209-229; sequence WILFGSFLIAVLNFFMWFIVD. The Cytoplasmic portion of the chain corresponds to 230-305; that stretch reads ESPKWLLAHG…RDRTNVKSRH (76 aa). Residues 306 to 326 form a helical membrane-spanning segment; sequence VITVLLFGQQFCGINSIVLYG. Topologically, residues 327–342 are mitochondrial intermembrane; the sequence is TKIISQLYPQHAIRIN. Residues 343–363 traverse the membrane as a helical segment; the sequence is FFISMVNVLVTILVSLLIHSL. The Cytoplasmic segment spans residues 364-366; sequence PRK. The helical transmembrane segment at 367-387 threads the bilayer; it reads PLLMTSTVLVSVTAFIMGIAM. Residues 388–396 are Mitochondrial intermembrane-facing; that stretch reads NHNKMNLLI. A helical transmembrane segment spans residues 397–417; that stretch reads VFSFIYMGVFTMGLNPLPFII. Residues 418-432 are Cytoplasmic-facing; it reads MREVSKPQDMVLAQR. A helical transmembrane segment spans residues 433–453; sequence YGTICNWVGTFIIAYTFPIIH. A topological domain (mitochondrial intermembrane) is located at residue Asp-454. Residues 455 to 475 traverse the membrane as a helical segment; the sequence is VLSGYVFIIFAIIACSISAFI. Residues 476–486 are Cytoplasmic-facing; the sequence is WKKVPETKRSG.

It belongs to the major facilitator superfamily. Sugar transporter (TC 2.A.1.1) family.

It localises to the mitochondrion membrane. In terms of biological role, may be involved in vacuolar protein sorting. This Saccharomyces cerevisiae (strain ATCC 204508 / S288c) (Baker's yeast) protein is Vacuolar protein sorting-associated protein 73 (VPS73).